The chain runs to 246 residues: Phycobilisome rod-core linker polypeptide CpcG2 (246 aa).

Residues 11 to 189 (SSQNQRVAGY…YWRDKLENSR (179 aa)) enclose the PBS-linker domain. The interval 224 to 246 (DTTRRDRPTVPASINPTASFPLR) is disordered. Residues 235-246 (ASINPTASFPLR) show a composition bias toward polar residues.

Belongs to the phycobilisome linker protein family. As to quaternary structure, the phycobilisome is a hemidiscoidal structure that is composed of two distinct substructures: a core complex and a number of rods radiating from the core.

The protein localises to the cellular thylakoid membrane. Rod-core linker protein required for attachment of phycocyanin to allophycocyanin in cores of phycobilisomes. Its function is as follows. Linker polypeptides determine the state of aggregation and the location of the disk-shaped phycobiliprotein units within the phycobilisome and modulate their spectroscopic properties in order to mediate a directed and optimal energy transfer. In Thermosynechococcus vestitus (strain NIES-2133 / IAM M-273 / BP-1), this protein is Phycobilisome rod-core linker polypeptide CpcG2 (cpcG2).